The following is a 344-amino-acid chain: Heat-inducible transcription repressor HrcA (344 aa).

It belongs to the HrcA family.

In terms of biological role, negative regulator of class I heat shock genes (grpE-dnaK-dnaJ and groELS operons). Prevents heat-shock induction of these operons. This Desulforudis audaxviator (strain MP104C) protein is Heat-inducible transcription repressor HrcA.